The sequence spans 239 residues: Zinc finger protein 575 (239 aa).

Residues 1–62 form a disordered region; it reads MLGGSVKSEV…PQRPHRCPDC (62 aa). The span at 22 to 31 shows a compositional bias: basic and acidic residues; sequence PETKAPHQDL. The span at 46 to 57 shows a compositional bias: basic residues; it reads RPRRRPPPQRPH. 6 consecutive C2H2-type zinc fingers follow at residues 57-79, 85-107, 113-135, 141-163, 171-193, and 207-230; these read HRCP…RLAH, HPCP…RLTH, HSCP…LWTH, YPCP…RHTH, YPCP…RLCH, and HRCS…RSHH.

This sequence belongs to the krueppel C2H2-type zinc-finger protein family.

It localises to the nucleus. In terms of biological role, may be involved in transcriptional regulation. The polypeptide is Zinc finger protein 575 (Znf575) (Mus musculus (Mouse)).